Consider the following 450-residue polypeptide: Phosphoglucosamine mutase (450 aa).

The Phosphoserine intermediate role is filled by Ser-101. Mg(2+) contacts are provided by Ser-101, Asp-241, Asp-243, and Asp-245. Ser-101 carries the post-translational modification Phosphoserine.

Belongs to the phosphohexose mutase family. Mg(2+) is required as a cofactor. Post-translationally, activated by phosphorylation.

The catalysed reaction is alpha-D-glucosamine 1-phosphate = D-glucosamine 6-phosphate. Catalyzes the conversion of glucosamine-6-phosphate to glucosamine-1-phosphate. This is Phosphoglucosamine mutase from Lysinibacillus sphaericus (strain C3-41).